We begin with the raw amino-acid sequence, 518 residues long: MPVPSSAVFECLLSLAAIKDVDARPTRTIDEVFTGKPLTTIPVGTAEDVEAAFAEAREAQANWAKRPVSERAEVIRRYRDLVIENREFLMDLLQAEAGKARWAAQEEVVDLVANANYYARVSAGLLKPRTVQALLPGIGKTTVGYQPKGVVGVISPWNYPMTLTASDSVPALIAGNAVVLKPDSQTPYCALACAELLYRAGLPRALYAIVPGPGSVVGTAIADNCDYLMFTGSSATGSRLAERAGRRLIGFSAELGGKNAMIVTRGVNLDKVAKAATRACFSNAGQLCISIERIYVEKDIADEFTRKFGDAVRSMKLGTAYDFSVDMGSLISEGQLKTVSGHVDDATAKGAKVIAGGKARPDVGPLFYEPTVLTDVTHEMECADNETFGPLVSIYPVADVEEAVEKANDTEYGLNASVWAGSTPEGEKIAARLRSGTVNVNEGYAFAWGSLSAPMGGMGISGVGRRHGPEGLLKYTESQTIATARVFNLDPPMGVPPTLWQKSLLPIVRTVMKLPGRK.

NADP(+) is bound by residues 157–158 (WN), 181–184 (KPDS), and 232–233 (GS). The active-site Proton acceptor is Glu254. An NADP(+)-binding site is contributed by Leu255. Cys288 serves as the catalytic Nucleophile. Position 386 (Glu386) interacts with NADP(+).

It belongs to the aldehyde dehydrogenase family.

It catalyses the reaction succinate semialdehyde + NADP(+) + H2O = succinate + NADPH + 2 H(+). In terms of biological role, catalyzes the NADP(+)-dependent oxidation of succinate semialdehyde to succinate. Although it has succinate semialdehyde dehydrogenase activity, is likely to act physiologically on a different aldehyde(s). In Mycobacterium ulcerans (strain Agy99), this protein is Putative succinate-semialdehyde dehydrogenase [NADP(+)] 2 (gabD2).